A 93-amino-acid polypeptide reads, in one-letter code: Putative septation protein SpoVG (93 aa).

The protein belongs to the SpoVG family.

Could be involved in septation. This Fusobacterium nucleatum subsp. nucleatum (strain ATCC 25586 / DSM 15643 / BCRC 10681 / CIP 101130 / JCM 8532 / KCTC 2640 / LMG 13131 / VPI 4355) protein is Putative septation protein SpoVG.